The primary structure comprises 53 residues: Weak toxin NWT (53 aa).

3 disulfide bridges follow: C6/C11, C17/C33, and C37/C48.

It belongs to the three-finger toxin family. Ancestral subfamily. Orphan group II sub-subfamily. In terms of tissue distribution, expressed by the venom gland.

The protein localises to the secreted. Its function is as follows. Binds with low affinity and weakly inhibits muscle nicotinic acetylcholine receptor (nAChR). This chain is Weak toxin NWT, found in Naja kaouthia (Monocled cobra).